A 643-amino-acid polypeptide reads, in one-letter code: Probable extracellular metalloproteinase 4 (643 aa).

The signal sequence occupies residues methionine 1–alanine 18. Residues histidine 19–alanine 254 constitute a propeptide that is removed on maturation. Residues serine 49–asparagine 69 form a disordered region. Positions glutamate 58–asparagine 69 are enriched in polar residues. N-linked (GlcNAc...) asparagine glycosylation is found at asparagine 271 and asparagine 420. Histidine 437 contacts Zn(2+). Residue glutamate 438 is part of the active site. Residue histidine 441 participates in Zn(2+) binding. Residues asparagine 603 and asparagine 629 are each glycosylated (N-linked (GlcNAc...) asparagine).

It belongs to the peptidase M36 family. The cofactor is Zn(2+).

It localises to the secreted. Functionally, secreted metalloproteinase probably acting as a virulence factor. This Trichophyton verrucosum (strain HKI 0517) protein is Probable extracellular metalloproteinase 4 (MEP4).